The following is a 144-amino-acid chain: Transcription antitermination protein NusB (144 aa).

Belongs to the NusB family.

Involved in transcription antitermination. Required for transcription of ribosomal RNA (rRNA) genes. Binds specifically to the boxA antiterminator sequence of the ribosomal RNA (rrn) operons. The polypeptide is Transcription antitermination protein NusB (Leifsonia xyli subsp. xyli (strain CTCB07)).